The sequence spans 382 residues: Alkane 1-monooxygenase 1 (382 aa).

Transmembrane regions (helical) follow at residues 10–30 (MLAI…SMPF), 43–63 (FWAF…DMLF), 90–110 (LATV…FVAF), and 121–141 (WILS…HELI). Positions 138 and 142 each coordinate Fe cation. The chain crosses the membrane as a helical span at residues 146–166 (ALEQAAGGILLAAVCYAGFKV). Positions 168, 172, and 173 each coordinate Fe cation. The helical transmembrane segment at 236-256 (LALLVGFGWAFGWLGMVFFLG) threads the bilayer. Positions 312, 315, and 316 each coordinate Fe cation.

The protein belongs to the fatty acid desaturase type 1 family. AlkB subfamily. It depends on Fe(3+) as a cofactor.

The protein localises to the cell inner membrane. It catalyses the reaction octane + 2 reduced [rubredoxin] + O2 + 2 H(+) = 2 oxidized [rubredoxin] + octan-1-ol + H2O. The protein operates within hydrocarbon metabolism; alkane degradation. Catalyzes the hydroxylation of n-alkanes in the presence of a NADH-rubredoxin reductase and rubredoxin. It preferably hydroxylases C16-C24 hydrocarbons. This chain is Alkane 1-monooxygenase 1 (alkB1), found in Pseudomonas aeruginosa (strain ATCC 15692 / DSM 22644 / CIP 104116 / JCM 14847 / LMG 12228 / 1C / PRS 101 / PAO1).